The sequence spans 347 residues: UDP-3-O-acylglucosamine N-acyltransferase (347 aa).

The Proton acceptor role is filled by histidine 241.

This sequence belongs to the transferase hexapeptide repeat family. LpxD subfamily. Homotrimer.

The catalysed reaction is a UDP-3-O-[(3R)-3-hydroxyacyl]-alpha-D-glucosamine + a (3R)-hydroxyacyl-[ACP] = a UDP-2-N,3-O-bis[(3R)-3-hydroxyacyl]-alpha-D-glucosamine + holo-[ACP] + H(+). It participates in bacterial outer membrane biogenesis; LPS lipid A biosynthesis. Functionally, catalyzes the N-acylation of UDP-3-O-acylglucosamine using 3-hydroxyacyl-ACP as the acyl donor. Is involved in the biosynthesis of lipid A, a phosphorylated glycolipid that anchors the lipopolysaccharide to the outer membrane of the cell. The chain is UDP-3-O-acylglucosamine N-acyltransferase from Neisseria meningitidis serogroup A / serotype 4A (strain DSM 15465 / Z2491).